We begin with the raw amino-acid sequence, 108 residues long: Insulin (108 aa).

An N-terminal signal peptide occupies residues Met-1–Ala-23. Intrachain disulfides connect Cys-30–Cys-94 and Cys-43–Cys-107. The propeptide at Glu-57–Ala-88 is c peptide.

This sequence belongs to the insulin family. Heterodimer of a B chain and an A chain linked by two disulfide bonds.

The protein localises to the secreted. Insulin decreases blood glucose concentration. It increases cell permeability to monosaccharides, amino acids and fatty acids. It accelerates glycolysis, the pentose phosphate cycle, and glycogen synthesis in liver. This is Insulin (INS) from Rodentia sp.